The chain runs to 163 residues: Ribosome maturation factor RimM (163 aa).

Residues 92-162 enclose the PRC barrel domain; it reads EDEFYVADLV…AGRAVVRPPE (71 aa).

Belongs to the RimM family. As to quaternary structure, binds ribosomal protein uS19.

It is found in the cytoplasm. Its function is as follows. An accessory protein needed during the final step in the assembly of 30S ribosomal subunit, possibly for assembly of the head region. Essential for efficient processing of 16S rRNA. May be needed both before and after RbfA during the maturation of 16S rRNA. It has affinity for free ribosomal 30S subunits but not for 70S ribosomes. The polypeptide is Ribosome maturation factor RimM (Rubrobacter xylanophilus (strain DSM 9941 / JCM 11954 / NBRC 16129 / PRD-1)).